A 236-amino-acid chain; its full sequence is Opacity protein opA50 (236 aa).

A signal peptide is located at residue alanine 1.

This sequence belongs to the opacity porin family.

It is found in the cell outer membrane. In terms of biological role, implicated in a number of adherence functions. OPA proteins are implicated in pathogenesis and are subject to phase variation. The protein is Opacity protein opA50 (opaC) of Neisseria gonorrhoeae.